Reading from the N-terminus, the 419-residue chain is Mitochondrial inner membrane magnesium transporter MRS2 (419 aa).

Transmembrane regions (helical) follow at residues 297-317 (VTIV…YGMN) and 328-348 (GMVL…WFNL). A YGMN motif is present at residues 314–317 (YGMN).

It belongs to the CorA metal ion transporter (MIT) (TC 1.A.35) family. Homopentamer. Forms homooligomers. Interacts with MFM1.

It localises to the mitochondrion inner membrane. High-conductance magnesium-selective channel that mediates the influx of magnesium into the mitochondrial matrix. Essential for the splicing of mRNA group II introns in mitochondria by affecting mitochondrial magnesium concentrations, which are critical for group II intron splicing. It also suppresses a variety of mitochondrial intron mutations and its absence may disturb the assembly of mitochondrial membrane complexes. The sequence is that of Mitochondrial inner membrane magnesium transporter MRS2 (MRS2) from Yarrowia lipolytica (strain CLIB 122 / E 150) (Yeast).